Reading from the N-terminus, the 445-residue chain is N-succinylarginine dihydrolase (445 aa).

Residues 19–28, Asn-110, and 137–138 each bind substrate; these read AGLSFGNVAS and HR. Glu-174 is a catalytic residue. Arg-214 serves as a coordination point for substrate. His-250 is a catalytic residue. Residues Asp-252 and Asn-363 each coordinate substrate. Cys-369 serves as the catalytic Nucleophile.

It belongs to the succinylarginine dihydrolase family. Homodimer.

The catalysed reaction is N(2)-succinyl-L-arginine + 2 H2O + 2 H(+) = N(2)-succinyl-L-ornithine + 2 NH4(+) + CO2. It functions in the pathway amino-acid degradation; L-arginine degradation via AST pathway; L-glutamate and succinate from L-arginine: step 2/5. Its function is as follows. Catalyzes the hydrolysis of N(2)-succinylarginine into N(2)-succinylornithine, ammonia and CO(2). This is N-succinylarginine dihydrolase from Shewanella woodyi (strain ATCC 51908 / MS32).